The following is a 348-amino-acid chain: MRPFKLMGHERSLTQVKYNQEGDLLFSVAKDSSASVWFASNGERLGTFEGHMGTIWSIDVDSNTHYAVTGSADLTIKLWLVETGECVYTYEMPTPVRRVVFSPDNSKLLSVTDQVMGQVGTISVFDVNNEEPKNQSSKPSLVIPTRDGAKKVTIAGWSAGGKYIIAGHEDGLVSKYDGATGEFIDSVQAHGIHNEEKIHLVTDIQFAPEDKSYFITSSKDKCSCLIDVETLEIMKVYKADAPMNTAAITPLKDFVILGGGQEARNVTTTAESQGKFEARFYHKIFIDEIGRVKGHFGPLNTIAVHPDGTGYASGGEDGFIRLHSFDKSYYDFEYDAERTERAIAAGTT.

6 WD repeats span residues 8 to 49 (GHER…GTFE), 51 to 91 (HMGT…YTYE), 93 to 135 (PTPV…PKNQ), 147 to 186 (DGAK…FIDS), 196 to 238 (EKIH…KVYK), and 294 to 333 (GHFG…YDFE).

The protein belongs to the eIF-3 subunit I family. In terms of assembly, component of the eukaryotic translation initiation factor 3 (eIF-3) complex.

Its subcellular location is the cytoplasm. Its function is as follows. Component of the eukaryotic translation initiation factor 3 (eIF-3) complex, which is involved in protein synthesis of a specialized repertoire of mRNAs and, together with other initiation factors, stimulates binding of mRNA and methionyl-tRNAi to the 40S ribosome. The eIF-3 complex specifically targets and initiates translation of a subset of mRNAs involved in cell proliferation. This Meyerozyma guilliermondii (strain ATCC 6260 / CBS 566 / DSM 6381 / JCM 1539 / NBRC 10279 / NRRL Y-324) (Yeast) protein is Eukaryotic translation initiation factor 3 subunit I.